A 353-amino-acid polypeptide reads, in one-letter code: uncharacterized protein (353 aa).

The N-terminal stretch at 1–24 (MRVVKRIAVACYLGITIFSGIAFG) is a signal peptide.

Belongs to the chlamydial CPn_1058/CT_355/TC_0634 family.

This is an uncharacterized protein from Chlamydia muridarum (strain MoPn / Nigg).